The following is a 538-amino-acid chain: Probable bifunctional riboflavin biosynthesis protein RIBA 1, chloroplastic (538 aa).

Polar residues predominate over residues 1 to 16 (MSRLSSIYSQHRTSGL). The tract at residues 1–29 (MSRLSSIYSQHRTSGLRSDRSIMPNSTSN) is disordered. Residues 1 to 73 (MSRLSSIYSQ…NGQASPSKVV (73 aa)) constitute a chloroplast transit peptide. The segment at 46-311 (RNFHISHAVG…IADLIRYRRK (266 aa)) is DHBP synthase. Residues 134 to 135 (RE), aspartate 139, 249 to 253 (RAGHT), and glutamate 273 contribute to the D-ribulose 5-phosphate site. Glutamate 135 serves as a coordination point for Mg(2+). Histidine 252 is a binding site for Mg(2+). The tract at residues 312–530 (RDRLVERVCV…DGGIKKEQDQ (219 aa)) is GTP cyclohydrolase II. GTP is bound at residue 362–366 (RVHSE). Residues cysteine 367, cysteine 378, and cysteine 380 each coordinate Zn(2+). Residues glutamine 383, 406 to 408 (EGR), and threonine 428 contribute to the GTP site. Aspartate 440 functions as the Proton acceptor; for GTP cyclohydrolase activity in the catalytic mechanism. Arginine 442 (nucleophile; for GTP cyclohydrolase activity) is an active-site residue. Threonine 463 and lysine 468 together coordinate GTP. The tract at residues 506–538 (HVYGTRPSGNTSTLADGGIKKEQDQIDSASEQE) is disordered.

This sequence in the N-terminal section; belongs to the DHBP synthase family. It in the C-terminal section; belongs to the GTP cyclohydrolase II family. Mg(2+) is required as a cofactor. It depends on Mn(2+) as a cofactor. Zn(2+) serves as cofactor.

The protein localises to the plastid. It is found in the chloroplast. The enzyme catalyses D-ribulose 5-phosphate = (2S)-2-hydroxy-3-oxobutyl phosphate + formate + H(+). The catalysed reaction is GTP + 4 H2O = 2,5-diamino-6-hydroxy-4-(5-phosphoribosylamino)-pyrimidine + formate + 2 phosphate + 3 H(+). It functions in the pathway cofactor biosynthesis; riboflavin biosynthesis; 2-hydroxy-3-oxobutyl phosphate from D-ribulose 5-phosphate: step 1/1. Its pathway is cofactor biosynthesis; riboflavin biosynthesis; 5-amino-6-(D-ribitylamino)uracil from GTP: step 1/4. Its function is as follows. Involved in riboflavin biosynthesis. Catalyzes both the conversion of D-ribulose 5-phosphate to formate and 3,4-dihydroxy-2-butanone 4-phosphate and the conversion of GTP to 2,5-diamino-6-ribosylamino-4(3H)-pyrimidinone 5'-phosphate (DARP), formate and pyrophosphate. The chain is Probable bifunctional riboflavin biosynthesis protein RIBA 1, chloroplastic (RIBA1) from Oryza sativa subsp. japonica (Rice).